A 67-amino-acid polypeptide reads, in one-letter code: Protein C' (67 aa).

This sequence belongs to the rhabdoviruses C protein family.

In terms of biological role, seems to stimulates transcription by the viral polymerase. May play a role in viral pathogenesis or transmission by insects vectors. The sequence is that of Protein C' (P) from Vesicular stomatitis Indiana virus (strain San Juan) (VSIV).